The following is a 434-amino-acid chain: Prenyltransferase fogH (434 aa).

L-tryptophan is bound at residue glutamate 86. Residues arginine 101, arginine 248, lysine 250, tyrosine 252, and tyrosine 346 each coordinate substrate.

The protein belongs to the tryptophan dimethylallyltransferase family.

The protein operates within secondary metabolite biosynthesis. In terms of biological role, prenyltransferase; part of the gene cluster that mediates the biosynthesis of flavoglaucin and congeners (including aspergin, dihydroauroglaucin and auroglaucin), prenylated salicylaldehyde derivatives carrying a saturated or an unsaturated C-7 side chain. The PKS fogA releases the carboxylic acid (8E,10E,12E)-3,5,7-trihydroxytetradeca-8,10,12-trienoic acid as its product, as well as derivatives with one and two double bonds. FogA is indeed able to reduce the initial triketide, thus being at least partially responsible for the differently saturated heptyl side chains of flavoglaucin congeners. The oxidoreductases fogB, fogC and fogD modify the nascent polyketide in fogA-bound form and, together, fogA, fogB, fogC and fogD are necessary for the formation of the aromatic core and the cyclized PKS products are released as salicyl alcohols. In particular, fogB is responsible for oxidation of a hydroxyl group or reduction of remaining double bond(s) at the C-7 residue whereas fogD is probably involved in the reductive release of the modified PKS products. The cytochrome P450 monooxygenase fogE is then responsible for the hydroxylation at C-3 of the benzene ring. The fogE products are substrates of the prenyltransferase fogH and the prenylated benzyl alcohols are subsequently oxidized by the fogF to produce the final aryl aldehydes flavoglaucin and congeners. The short-chain dehydrogenase fogG does not seem to be involved in the biosynthesis of the prenylated salicylaldehyde derivatives. This chain is Prenyltransferase fogH, found in Aspergillus ruber (strain CBS 135680).